The chain runs to 630 residues: Phosphomethylpyrimidine synthase (630 aa).

Substrate is bound by residues N227, M256, Y285, H321, 341–343 (SRG), 382–385 (DGLR), and E421. Zn(2+) is bound at residue H425. Residue Y448 participates in substrate binding. H489 serves as a coordination point for Zn(2+). The [4Fe-4S] cluster site is built by C569, C572, and C577.

It belongs to the ThiC family. In terms of assembly, homodimer. [4Fe-4S] cluster serves as cofactor.

It carries out the reaction 5-amino-1-(5-phospho-beta-D-ribosyl)imidazole + S-adenosyl-L-methionine = 4-amino-2-methyl-5-(phosphooxymethyl)pyrimidine + CO + 5'-deoxyadenosine + formate + L-methionine + 3 H(+). The protein operates within cofactor biosynthesis; thiamine diphosphate biosynthesis. Functionally, catalyzes the synthesis of the hydroxymethylpyrimidine phosphate (HMP-P) moiety of thiamine from aminoimidazole ribotide (AIR) in a radical S-adenosyl-L-methionine (SAM)-dependent reaction. In Hydrogenovibrio crunogenus (strain DSM 25203 / XCL-2) (Thiomicrospira crunogena), this protein is Phosphomethylpyrimidine synthase.